Reading from the N-terminus, the 175-residue chain is Myosin regulatory light chain 2, atrial isoform (175 aa).

N-acetylalanine is present on Ala2. Phosphoserine is present on residues Ser22 and Ser23. 3 consecutive EF-hand domains span residues 32 to 67, 102 to 137, and 138 to 173; these read AQIQ…LGKV, DPEE…QADK, and FSPA…GDEK. Ca(2+)-binding residues include Asp45, Asn47, Asp49, and Asp56.

Myosin is a hexamer of 2 heavy chains and 4 light chains.

This chain is Myosin regulatory light chain 2, atrial isoform (MYL7), found in Sus scrofa (Pig).